A 367-amino-acid polypeptide reads, in one-letter code: Beta sliding clamp (367 aa).

The protein belongs to the beta sliding clamp family. In terms of assembly, forms a ring-shaped head-to-tail homodimer around DNA which binds and tethers DNA polymerases and other proteins to the DNA. The DNA replisome complex has a single clamp-loading complex (3 tau and 1 each of delta, delta', psi and chi subunits) which binds 3 Pol III cores (1 core on the leading strand and 2 on the lagging strand) each with a beta sliding clamp dimer. Additional proteins in the replisome are other copies of gamma, psi and chi, Ssb, DNA helicase and RNA primase.

It localises to the cytoplasm. Its function is as follows. Confers DNA tethering and processivity to DNA polymerases and other proteins. Acts as a clamp, forming a ring around DNA (a reaction catalyzed by the clamp-loading complex) which diffuses in an ATP-independent manner freely and bidirectionally along dsDNA. Initially characterized for its ability to contact the catalytic subunit of DNA polymerase III (Pol III), a complex, multichain enzyme responsible for most of the replicative synthesis in bacteria; Pol III exhibits 3'-5' exonuclease proofreading activity. The beta chain is required for initiation of replication as well as for processivity of DNA replication. In Pseudomonas aeruginosa (strain ATCC 15692 / DSM 22644 / CIP 104116 / JCM 14847 / LMG 12228 / 1C / PRS 101 / PAO1), this protein is Beta sliding clamp (dnaN).